We begin with the raw amino-acid sequence, 567 residues long: Geranylgeranyl transferase type-2 subunit alpha (567 aa).

6 PFTA repeats span residues 44–78 (LDES…RLEV), 88–122 (LVKA…RLPE), 124–158 (NWAR…QAAV), 159–193 (PPAE…QLHP), 207–241 (VLLK…RADP), and 363–397 (VLQS…ALDP). The residue at position 98 (serine 98) is a Phosphoserine. LRR repeat units lie at residues 442-463 (DVRV…EQLL), 464-486 (LVTH…AALR), 487-508 (CLEV…TNLP), 509-530 (RLQE…QPLA), and 534-555 (RLVL…SEHL).

This sequence belongs to the protein prenyltransferase subunit alpha family. In terms of assembly, heterotrimer composed of RABGGTA, RABGGTB and CHM; within this trimer, RABGGTA and RABGGTB form the catalytic component B, while CHM (component A) mediates peptide substrate binding. The Rab GGTase dimer (RGGT) interacts with CHM (component A) prior to Rab protein binding; the association is stabilized by geranylgeranyl pyrophosphate (GGpp). The CHM:RGGT:Rab complex is destabilized by GGpp. Interacts with non-phosphorylated form of RAB8A; phosphorylation of RAB8A disrupts this interaction.

The enzyme catalyses geranylgeranyl diphosphate + L-cysteinyl-[protein] = S-geranylgeranyl-L-cysteinyl-[protein] + diphosphate. With respect to regulation, the enzymatic reaction requires the aid of a Rab escort protein (also called component A), such as CHM. Catalyzes the transfer of a geranylgeranyl moiety from geranylgeranyl diphosphate to both cysteines of Rab proteins with the C-terminal sequence -XXCC, -XCXC and -CCXX, such as RAB1A, RAB3A, RAB5A and RAB7A. The polypeptide is Geranylgeranyl transferase type-2 subunit alpha (RABGGTA) (Sus scrofa (Pig)).